An 854-amino-acid polypeptide reads, in one-letter code: DNA mismatch repair protein MutS (854 aa).

Position 615–622 (G615–S622) interacts with ATP.

It belongs to the DNA mismatch repair MutS family.

This protein is involved in the repair of mismatches in DNA. It is possible that it carries out the mismatch recognition step. This protein has a weak ATPase activity. The protein is DNA mismatch repair protein MutS of Proteus mirabilis (strain HI4320).